Reading from the N-terminus, the 186-residue chain is Peptidyl-tRNA hydrolase (186 aa).

Y14 serves as a coordination point for tRNA. Residue H19 is the Proton acceptor of the active site. TRNA is bound by residues F64, N66, and N112.

Belongs to the PTH family. As to quaternary structure, monomer.

The protein localises to the cytoplasm. The catalysed reaction is an N-acyl-L-alpha-aminoacyl-tRNA + H2O = an N-acyl-L-amino acid + a tRNA + H(+). Hydrolyzes ribosome-free peptidyl-tRNAs (with 1 or more amino acids incorporated), which drop off the ribosome during protein synthesis, or as a result of ribosome stalling. Its function is as follows. Catalyzes the release of premature peptidyl moieties from peptidyl-tRNA molecules trapped in stalled 50S ribosomal subunits, and thus maintains levels of free tRNAs and 50S ribosomes. In Anaplasma marginale (strain St. Maries), this protein is Peptidyl-tRNA hydrolase.